We begin with the raw amino-acid sequence, 105 residues long: UPF0145 protein OEOE_0637 (105 aa).

It belongs to the UPF0145 family.

The sequence is that of UPF0145 protein OEOE_0637 from Oenococcus oeni (strain ATCC BAA-331 / PSU-1).